The following is a 526-amino-acid chain: Neutrophil cytosol factor 2 (526 aa).

3 TPR repeats span residues 37–70 (SRIC…DKHL), 71–104 (AVAY…LRGN), and 121–154 (CEVL…KSEP). Thr-233 carries the phosphothreonine modification. An SH3 1 domain is found at 240–299 (LEGEAHRVLFGFVPETKEELQVMPGNIVFVLKKGNDNWATVMFNGQKGLVPCNYLEPVEL). Positions 303–315 (PQQQPQEESSPQS) are enriched in low complexity. The segment at 303–346 (PQQQPQEESSPQSDIPAPPSSKAPGRPQLSPGQKQKEEPKEVKL) is disordered. Residues 336 to 345 (KQKEEPKEVK) show a composition bias toward basic and acidic residues. Positions 351 to 429 (PYTLKVHYKY…YCLTLWCENT (79 aa)) constitute a PB1 domain. Ser-399 is modified (phosphoserine). Positions 433–458 (QGFPDEPKESEKADANNQTTEPQLKK) are disordered. Basic and acidic residues predominate over residues 437 to 446 (DEPKESEKAD). Residues 457 to 516 (KKGSQVEALFSYEATQPEDLEFQEGDIILVLSKVNEEWLEGECKGKVGIFPKVFVEDCAT) form the SH3 2 domain.

This sequence belongs to the NCF2/NOXA1 family. In terms of assembly, component of the phagocyte NADPH oxidase complex composed of an obligatory core heterodimer formed by the membrane proteins CYBA and CYBB and the cytosolic regulatory subunits NCF1/p47-phox, NCF2/p67-phox, NCF4/p40-phox and the small GTPase RAC1 or RAC2. Part of a cytosolic complex composed at least by NCF1, NCF2 and NCF4. Interacts with NCF4. Interacts (via the C-terminal SH3 domain) with NCF1 (via C-terminus). Interacts with SYTL1 and RAC1. May interact with NOXO1. Interacts with S100A8 and calprotectin (S100A8/9). Interacts with GBP7 (via GB1/RHD3-type G domain). Interacts with CYBB; the interaction is enhanced in the presence of GBP7.

The protein resides in the cytoplasm. Subunit of the phagocyte NADPH oxidase complex that mediates the transfer of electrons from cytosolic NADPH to O2 to produce the superoxide anion (O2(-)). In the activated complex, electrons are first transferred from NADPH to flavin adenine dinucleotide (FAD) and subsequently transferred via two heme molecules to molecular oxygen, producing superoxide through an outer-sphere reaction. Activation of the NADPH oxidase complex is initiated by the assembly of cytosolic subunits of the NADPH oxidase complex with the core NADPH oxidase complex to form a complex at the plasma membrane or phagosomal membrane. This activation process is initiated by phosphorylation dependent binding of the cytosolic NCF1/p47-phox subunit to the C-terminus of CYBA/p22-phox. This Homo sapiens (Human) protein is Neutrophil cytosol factor 2.